We begin with the raw amino-acid sequence, 310 residues long: MALTLSLNTNPLVNRFAEPDDLIETVARDLRLRDLQLTHEFINPSWQASTIRRLTRDMDRALQRTGVRVTSGMTGPYGRLNHFGHPDRDVRRYYVDWFKTFADIIGDLGGKSVGTQFAIFTYKDFDDPARREELIKIAIDCWAEVAEHAAGAGLDYVFWEPMSIGREFGETIAECMKLQDRLTAANMAIPMWMMADIDHGDVTSANPDDYDPYAWARTVPKVSPIIHIKQSLMDKGGHRPFTAAFNAKGRIQPEPLLKAFAEGGAVDNEICLELSFKEREPNDREVIPQIAESVAFWAPHIDTGAKDLKI.

The enzyme catalyses D-erythrulose 1-phosphate = L-erythrulose 1-phosphate. It functions in the pathway carbohydrate metabolism; erythritol degradation. Functionally, catalyzes the racemization of D-erythrulose 1-phosphate to L-erythrulose 1-phosphate. In Brucella abortus (strain 2308), this protein is D-erythrulose 1-phosphate 3-epimerase.